A 502-amino-acid chain; its full sequence is ATP synthase subunit alpha (502 aa).

169–176 (GDRATGKT) lines the ATP pocket.

It belongs to the ATPase alpha/beta chains family. F-type ATPases have 2 components, CF(1) - the catalytic core - and CF(0) - the membrane proton channel. CF(1) has five subunits: alpha(3), beta(3), gamma(1), delta(1), epsilon(1). CF(0) has three main subunits: a(1), b(2) and c(9-12). The alpha and beta chains form an alternating ring which encloses part of the gamma chain. CF(1) is attached to CF(0) by a central stalk formed by the gamma and epsilon chains, while a peripheral stalk is formed by the delta and b chains.

It is found in the cell inner membrane. It carries out the reaction ATP + H2O + 4 H(+)(in) = ADP + phosphate + 5 H(+)(out). Its function is as follows. Produces ATP from ADP in the presence of a proton gradient across the membrane. The alpha chain is a regulatory subunit. This chain is ATP synthase subunit alpha, found in Hydrogenobaculum sp. (strain Y04AAS1).